A 497-amino-acid polypeptide reads, in one-letter code: D-gluconate dehydratase (497 aa).

A Mg(2+)-binding site is contributed by E303. Residue H305 is the Proton donor of the active site. E329 and E355 together coordinate Mg(2+). H405 acts as the Proton acceptor in catalysis.

It belongs to the mandelate racemase/muconate lactonizing enzyme family. GaD subfamily. Mg(2+) serves as cofactor.

It carries out the reaction D-gluconate = 2-dehydro-3-deoxy-D-gluconate + H2O. Its pathway is carbohydrate acid metabolism; D-gluconate degradation. Its function is as follows. Involved in the degradation of glucose via the Entner-Doudoroff pathway. Catalyzes the dehydration of gluconate to produce 2-keto-3-deoxygluconate (KDG). It is not able to use D-galactonate as substrate. The polypeptide is D-gluconate dehydratase (gad) (Thermoproteus tenax).